Here is a 469-residue protein sequence, read N- to C-terminus: Putative dipeptidase SH1171 (469 aa).

His-84 provides a ligand contact to Zn(2+). Residue Asp-86 is part of the active site. Asp-115 provides a ligand contact to Zn(2+). Glu-149 acts as the Proton acceptor in catalysis. Residues Glu-150, Asp-173, and His-440 each contribute to the Zn(2+) site.

It belongs to the peptidase M20A family. Zn(2+) is required as a cofactor.

This is Putative dipeptidase SH1171 from Staphylococcus haemolyticus (strain JCSC1435).